The primary structure comprises 972 residues: Translation initiation factor IF-2 (972 aa).

Over residues 49-63 (HLRKSHGATDGDKRK) the composition is skewed to basic and acidic residues. 2 disordered regions span residues 49–86 (HLRKSHGATDGDKRKITLTRKHTSEIKQSDATGKARTI) and 100–383 (DDVA…TFQA). Residues 105-114 (GAEQGQAQVA) are compositionally biased toward low complexity. Residues 121-177 (ELKRREEEARREAELLEKQAQELRERQERLEREEAERRAREEAAEAERRRAEEEAAA) show a composition bias toward basic and acidic residues. The span at 178 to 209 (KRAAAAAVEAQQAAAQQAAEAQQETAGAQSAQ) shows a compositional bias: low complexity. Positions 210–261 (DEARAAAERAAQREAAKKAEDAAREAADKTRAEQEEIRKRREAAEAEARAIR) are enriched in basic and acidic residues. Pro residues predominate over residues 277 to 286 (PPKPVEPPKP). Over residues 298–327 (KPAGAGAARPAVKKPAGAAPATTQAPAGAG) the composition is skewed to low complexity. The segment covering 356–369 (SSGGVDRGWRGGPK) has biased composition (gly residues). The region spanning 472 to 641 (PRPPVVTVMG…LLQAEVLELK (170 aa)) is the tr-type G domain. A G1 region spans residues 481–488 (GHVDHGKT). 481–488 (GHVDHGKT) is a GTP binding site. Positions 506–510 (GITQH) are G2. The interval 527–530 (DTPG) is G3. Residues 527–531 (DTPGH) and 581–584 (NKID) each bind GTP. The interval 581 to 584 (NKID) is G4. Positions 617-619 (SAK) are G5.

Belongs to the TRAFAC class translation factor GTPase superfamily. Classic translation factor GTPase family. IF-2 subfamily.

It is found in the cytoplasm. One of the essential components for the initiation of protein synthesis. Protects formylmethionyl-tRNA from spontaneous hydrolysis and promotes its binding to the 30S ribosomal subunits. Also involved in the hydrolysis of GTP during the formation of the 70S ribosomal complex. The sequence is that of Translation initiation factor IF-2 from Burkholderia ambifaria (strain MC40-6).